The following is a 67-amino-acid chain: DNA-directed RNA polymerase subunit omega (67 aa).

It belongs to the RNA polymerase subunit omega family. The RNAP catalytic core consists of 2 alpha, 1 beta, 1 beta' and 1 omega subunit. When a sigma factor is associated with the core the holoenzyme is formed, which can initiate transcription.

It carries out the reaction RNA(n) + a ribonucleoside 5'-triphosphate = RNA(n+1) + diphosphate. Functionally, promotes RNA polymerase assembly. Latches the N- and C-terminal regions of the beta' subunit thereby facilitating its interaction with the beta and alpha subunits. The polypeptide is DNA-directed RNA polymerase subunit omega (Burkholderia ambifaria (strain MC40-6)).